Reading from the N-terminus, the 207-residue chain is LexA repressor (207 aa).

Positions 28–48 (RAEIAQKLGFKSANAAEEHLK) form a DNA-binding region, H-T-H motif. Residues Ser-124 and Lys-161 each act as for autocatalytic cleavage activity in the active site.

The protein belongs to the peptidase S24 family. In terms of assembly, homodimer.

It carries out the reaction Hydrolysis of Ala-|-Gly bond in repressor LexA.. Represses a number of genes involved in the response to DNA damage (SOS response), including recA and lexA. In the presence of single-stranded DNA, RecA interacts with LexA causing an autocatalytic cleavage which disrupts the DNA-binding part of LexA, leading to derepression of the SOS regulon and eventually DNA repair. The sequence is that of LexA repressor from Aeromonas hydrophila subsp. hydrophila (strain ATCC 7966 / DSM 30187 / BCRC 13018 / CCUG 14551 / JCM 1027 / KCTC 2358 / NCIMB 9240 / NCTC 8049).